Consider the following 382-residue polypeptide: Intermediate transcription factor 3 large subunit (382 aa).

It belongs to the poxviruses A23 family. As to quaternary structure, heterodimer of a 45 kDa and a 32 kDa subunit.

Its function is as follows. Acts with RNA polymerase to initiate transcription from intermediate gene promoters. This is Intermediate transcription factor 3 large subunit (VITF3L) from Camelus.